A 251-amino-acid polypeptide reads, in one-letter code: Cytochrome P450 monooxygenase ppzG (251 aa).

Position 250 (Cys250) interacts with heme.

The protein belongs to the cytochrome P450 family. Heme is required as a cofactor.

It functions in the pathway secondary metabolite biosynthesis. Functionally, cytochrome P450 monooxygenase; part of the gene cluster that mediates the biosynthesis of pyrrolopyrazines, secondary metabolites showing insecticidal activity. The role of ppzG within the pathway has still to be determined. The single multifunctional NRPS ppzA is sufficient to produce peramine via condensation of 1-pyrroline-5-carboxylate and arginine, N-methylation of the alpha-amino group of arginine and reduction of the thioester and the cyclization to form an iminium ion resulting in release from the peptide synthetase. Deprotonation of this intermediate and oxidation of the pyrroline ring would give rise to peramine. In Epichloe species that produce only peramine, the peramine synthetase gene is not localized in a gene cluster, in contrast to Metarhizium species that contain additional pyrrolopyrazine biosynthesis genes. The 2-oxoglutarate-Fe(II) type oxidoreductase ppzC hydroxylates peramine to yield the newly identified compound 8-hydroxyperamine whereas ppzD converts L-proline into trans-4-hydroxy-L-proline, a precursor of peramine biosynthesis. This chain is Cytochrome P450 monooxygenase ppzG, found in Metarhizium rileyi (strain RCEF 4871) (Nomuraea rileyi).